The primary structure comprises 289 residues: Purine nucleoside phosphorylase (289 aa).

Position 1 is an N-acetylmethionine (M1). Phosphate is bound by residues S33, H64, and 84–86 (RFH). Y88 provides a ligand contact to a purine D-ribonucleoside. A phosphate-binding site is contributed by A116. Positions 201 and 219 each coordinate a purine D-ribonucleoside. S220 lines the phosphate pocket. N243 contributes to the a purine D-ribonucleoside binding site. Residue S251 is modified to Phosphoserine. H257 lines the a purine D-ribonucleoside pocket.

This sequence belongs to the PNP/MTAP phosphorylase family. As to quaternary structure, homotrimer.

It is found in the cytoplasm. It carries out the reaction inosine + phosphate = alpha-D-ribose 1-phosphate + hypoxanthine. It catalyses the reaction guanosine + phosphate = alpha-D-ribose 1-phosphate + guanine. The catalysed reaction is 2'-deoxyguanosine + phosphate = 2-deoxy-alpha-D-ribose 1-phosphate + guanine. The enzyme catalyses 2'-deoxyinosine + phosphate = 2-deoxy-alpha-D-ribose 1-phosphate + hypoxanthine. It functions in the pathway purine metabolism; purine nucleoside salvage. Functionally, catalyzes the phosphorolytic breakdown of the N-glycosidic bond in the beta-(deoxy)ribonucleoside molecules, with the formation of the corresponding free purine bases and pentose-1-phosphate. Preferentially acts on 6-oxopurine nucleosides including inosine and guanosine. This chain is Purine nucleoside phosphorylase (PNP), found in Bos taurus (Bovine).